Here is a 366-residue protein sequence, read N- to C-terminus: Histidinol-phosphate aminotransferase (366 aa).

N6-(pyridoxal phosphate)lysine is present on K228.

This sequence belongs to the class-II pyridoxal-phosphate-dependent aminotransferase family. Histidinol-phosphate aminotransferase subfamily. In terms of assembly, homodimer. Requires pyridoxal 5'-phosphate as cofactor.

It catalyses the reaction L-histidinol phosphate + 2-oxoglutarate = 3-(imidazol-4-yl)-2-oxopropyl phosphate + L-glutamate. The protein operates within amino-acid biosynthesis; L-histidine biosynthesis; L-histidine from 5-phospho-alpha-D-ribose 1-diphosphate: step 7/9. The polypeptide is Histidinol-phosphate aminotransferase (Corynebacterium diphtheriae (strain ATCC 700971 / NCTC 13129 / Biotype gravis)).